A 228-amino-acid chain; its full sequence is tRNA (guanine-N(1)-)-methyltransferase (228 aa).

Residues G111 and 135–140 contribute to the S-adenosyl-L-methionine site; that span reads LGDYVL.

Belongs to the RNA methyltransferase TrmD family. As to quaternary structure, homodimer.

The protein resides in the cytoplasm. It carries out the reaction guanosine(37) in tRNA + S-adenosyl-L-methionine = N(1)-methylguanosine(37) in tRNA + S-adenosyl-L-homocysteine + H(+). Its function is as follows. Specifically methylates guanosine-37 in various tRNAs. The protein is tRNA (guanine-N(1)-)-methyltransferase of Clavibacter sepedonicus (Clavibacter michiganensis subsp. sepedonicus).